Here is a 195-residue protein sequence, read N- to C-terminus: ATP-dependent Clp protease proteolytic subunit (195 aa).

Ser102 acts as the Nucleophile in catalysis. Residue His125 is part of the active site.

This sequence belongs to the peptidase S14 family. Component of the chloroplastic Clp protease core complex.

Its subcellular location is the plastid. It localises to the chloroplast stroma. The enzyme catalyses Hydrolysis of proteins to small peptides in the presence of ATP and magnesium. alpha-casein is the usual test substrate. In the absence of ATP, only oligopeptides shorter than five residues are hydrolyzed (such as succinyl-Leu-Tyr-|-NHMec, and Leu-Tyr-Leu-|-Tyr-Trp, in which cleavage of the -Tyr-|-Leu- and -Tyr-|-Trp bonds also occurs).. Its function is as follows. Cleaves peptides in various proteins in a process that requires ATP hydrolysis. Has a chymotrypsin-like activity. Plays a major role in the degradation of misfolded proteins. The polypeptide is ATP-dependent Clp protease proteolytic subunit (Phaseolus vulgaris (Kidney bean)).